The sequence spans 510 residues: Probable lysine--tRNA ligase, cytoplasmic (510 aa).

The protein belongs to the class-II aminoacyl-tRNA synthetase family. In terms of assembly, homodimer.

The protein resides in the cytoplasm. The catalysed reaction is tRNA(Lys) + L-lysine + ATP = L-lysyl-tRNA(Lys) + AMP + diphosphate. In Encephalitozoon cuniculi (strain GB-M1) (Microsporidian parasite), this protein is Probable lysine--tRNA ligase, cytoplasmic.